A 258-amino-acid chain; its full sequence is MSESRTSADGGMETSYGFREVPGGEKQGLVNQVFHKVAKRYDIMNDVMSMGMHRAWKDAMIAALNPRKEPGYKVLDVAGGTGDIAFRIVEASGRQAHATVLDINGSMLGVGAERAEKKKLSGNLTFVEANAEELPFEAASFDAYTIAFGIRNVPRIDKALSEAYRVLKRGGRLLVLEFSEVDMPLLDKIYDAWSFNAIPQFGKAITGDAEPYQYLVESIRKFPNQENFAAMIRQAGFSRVTYTNYTGGIAALHSGWKL.

The segment at 1–20 (MSESRTSADGGMETSYGFRE) is disordered. S-adenosyl-L-methionine contacts are provided by residues Thr-81, Asp-102, and 130 to 131 (NA).

Belongs to the class I-like SAM-binding methyltransferase superfamily. MenG/UbiE family.

It carries out the reaction a 2-demethylmenaquinol + S-adenosyl-L-methionine = a menaquinol + S-adenosyl-L-homocysteine + H(+). It catalyses the reaction a 2-methoxy-6-(all-trans-polyprenyl)benzene-1,4-diol + S-adenosyl-L-methionine = a 5-methoxy-2-methyl-3-(all-trans-polyprenyl)benzene-1,4-diol + S-adenosyl-L-homocysteine + H(+). Its pathway is quinol/quinone metabolism; menaquinone biosynthesis; menaquinol from 1,4-dihydroxy-2-naphthoate: step 2/2. It participates in cofactor biosynthesis; ubiquinone biosynthesis. In terms of biological role, methyltransferase required for the conversion of demethylmenaquinol (DMKH2) to menaquinol (MKH2) and the conversion of 2-polyprenyl-6-methoxy-1,4-benzoquinol (DDMQH2) to 2-polyprenyl-3-methyl-6-methoxy-1,4-benzoquinol (DMQH2). The chain is Ubiquinone/menaquinone biosynthesis C-methyltransferase UbiE from Rhizobium etli (strain ATCC 51251 / DSM 11541 / JCM 21823 / NBRC 15573 / CFN 42).